A 272-amino-acid chain; its full sequence is Proteasome subunit beta type-5 (272 aa).

Residues 1–62 (MINIDFDNIE…APKALEFAHG (62 aa)) constitute a propeptide, removed in mature form. The active-site Nucleophile is threonine 63.

Belongs to the peptidase T1B family. The 26S proteasome consists of a 20S proteasome core and two 19S regulatory subunits. The 20S proteasome core is composed of 28 subunits that are arranged in four stacked rings, resulting in a barrel-shaped structure. The two end rings are each formed by seven alpha subunits, and the two central rings are each formed by seven beta subunits. The catalytic chamber with the active sites is on the inside of the barrel.

The protein localises to the cytoplasm. The protein resides in the nucleus. It catalyses the reaction Cleavage of peptide bonds with very broad specificity.. Its function is as follows. The proteasome is a multicatalytic proteinase complex which is characterized by its ability to cleave peptides with Arg, Phe, Tyr, Leu, and Glu adjacent to the leaving group at neutral or slightly basic pH. The proteasome has an ATP-dependent proteolytic activity. This Dictyostelium discoideum (Social amoeba) protein is Proteasome subunit beta type-5 (psmB5).